The primary structure comprises 279 residues: Thymidylate synthase (279 aa).

Residue 133-134 participates in dUMP binding; sequence RR. Cys154 acts as the Nucleophile in catalysis. DUMP contacts are provided by residues 178–181, Asn189, and 219–221; these read RSND and HIY. Asp181 serves as a coordination point for (6R)-5,10-methylene-5,6,7,8-tetrahydrofolate. Ala278 is a (6R)-5,10-methylene-5,6,7,8-tetrahydrofolate binding site.

It belongs to the thymidylate synthase family. Bacterial-type ThyA subfamily. In terms of assembly, homodimer.

It localises to the cytoplasm. The enzyme catalyses dUMP + (6R)-5,10-methylene-5,6,7,8-tetrahydrofolate = 7,8-dihydrofolate + dTMP. It functions in the pathway pyrimidine metabolism; dTTP biosynthesis. Its function is as follows. Catalyzes the reductive methylation of 2'-deoxyuridine-5'-monophosphate (dUMP) to 2'-deoxythymidine-5'-monophosphate (dTMP) while utilizing 5,10-methylenetetrahydrofolate (mTHF) as the methyl donor and reductant in the reaction, yielding dihydrofolate (DHF) as a by-product. This enzymatic reaction provides an intracellular de novo source of dTMP, an essential precursor for DNA biosynthesis. This is Thymidylate synthase from Streptococcus mutans serotype c (strain ATCC 700610 / UA159).